Reading from the N-terminus, the 1036-residue chain is ADAMTS-like protein 4 (1036 aa).

Residues 1-24 form the signal peptide; it reads MESWLGRLWLCMMLLLPLPQPCQD. The TSP type-1 1 domain occupies 47–91; sequence GPWGRWASCSQPCGVGVQRRSRTCELHPALPLPPRPPRHPEAHRP. Disordered stretches follow at residues 73 to 149 and 163 to 308; these read HPAL…IKPG and HRSR…WLPL. Residues 163-173 are compositionally biased toward basic residues; it reads HRSRRHPHRPG. Positions 215 to 253 are enriched in polar residues; it reads TPRSGTAQTEVLPRTSSAPSYTGTPAPTSSFGDSRSFQG. N-linked (GlcNAc...) asparagine glycans are attached at residues N454 and N737. 5 TSP type-1 domains span residues 687–748, 750–804, 805–871, 872–931, and 932–988; these read CPPY…HLCG, WEIS…DMGP, CTTA…GPCE, RTWR…QGQA, and CEDK…QPCN. Residues 991-1028 form the PLAC domain; it reads PDDQCKDSSPHCPLVVQARLCVYPYYTTTCCRSCAHVL.

Interacts with CTSB. Interacts with FBN1. In terms of processing, glycosylated. Can be O-fucosylated by POFUT2 on a serine or a threonine residue found within the consensus sequence C1-X(2)-(S/T)-C2-G of the TSP type-1 repeat domains where C1 and C2 are the first and second cysteine residue of the repeat, respectively. Fucosylated repeats can then be further glycosylated by the addition of a beta-1,3-glucose residue by the glucosyltransferase, B3GALTL. Fucosylation mediates the efficient secretion of ADAMTS family members. Can also be C-glycosylated with one or two mannose molecules on tryptophan residues within the consensus sequence W-X-X-W of the TPRs, and N-glycosylated. These other glycosylations can also facilitate secretion. Widely expressed in a range of tissues. Especially prevalent in brain, spinal cord, muscle, lung and heart.

Its subcellular location is the secreted. It is found in the extracellular space. The protein localises to the extracellular matrix. Its function is as follows. Positive regulation of apoptosis. May facilitate FBN1 microfibril biogenesis. The protein is ADAMTS-like protein 4 of Mus musculus (Mouse).